A 606-amino-acid polypeptide reads, in one-letter code: NADH-ubiquinone oxidoreductase chain 5 (606 aa).

The next 16 membrane-spanning stretches (helical) occupy residues 4-24 (FSSL…AINF), 43-63 (AFIT…EMII), 84-104 (FFSM…MEFS), 114-134 (INQF…LVTA), 140-160 (LFIG…WWYG), 171-191 (AILY…WFLI), 213-233 (LMGL…HPWL), 241-261 (TPVS…FLLI), 272-292 (FGQS…AMCA), 301-320 (IIAF…IGIN), 325-347 (AFLH…GSII), 366-386 (MPFT…MPFL), 413-433 (LVAT…ALLG), 457-477 (LLIG…PMTI), 485-505 (YLKM…LEIS), and 582-602 (GLIK…TTLL).

The protein belongs to the complex I subunit 5 family. In terms of assembly, core subunit of respiratory chain NADH dehydrogenase (Complex I) which is composed of 45 different subunits.

Its subcellular location is the mitochondrion inner membrane. The catalysed reaction is a ubiquinone + NADH + 5 H(+)(in) = a ubiquinol + NAD(+) + 4 H(+)(out). Functionally, core subunit of the mitochondrial membrane respiratory chain NADH dehydrogenase (Complex I) which catalyzes electron transfer from NADH through the respiratory chain, using ubiquinone as an electron acceptor. Essential for the catalytic activity and assembly of complex I. The sequence is that of NADH-ubiquinone oxidoreductase chain 5 (MT-ND5) from Ovis aries (Sheep).